A 602-amino-acid chain; its full sequence is Elongation factor 4 (602 aa).

The tr-type G domain maps to 7 to 189 (KYIRNFSIVA…AIVNKVPAPD (183 aa)). GTP is bound by residues 19–24 (DHGKST) and 136–139 (NKID).

Belongs to the TRAFAC class translation factor GTPase superfamily. Classic translation factor GTPase family. LepA subfamily.

It localises to the cell membrane. The enzyme catalyses GTP + H2O = GDP + phosphate + H(+). In terms of biological role, required for accurate and efficient protein synthesis under certain stress conditions. May act as a fidelity factor of the translation reaction, by catalyzing a one-codon backward translocation of tRNAs on improperly translocated ribosomes. Back-translocation proceeds from a post-translocation (POST) complex to a pre-translocation (PRE) complex, thus giving elongation factor G a second chance to translocate the tRNAs correctly. Binds to ribosomes in a GTP-dependent manner. This is Elongation factor 4 from Clostridium botulinum (strain 657 / Type Ba4).